The sequence spans 98 residues: Integration host factor subunit alpha (98 aa).

The interval 49–71 is disordered; that stretch reads FGNFDLRDKNQRPGRNPKTGEDI.

The protein belongs to the bacterial histone-like protein family. In terms of assembly, heterodimer of an alpha and a beta chain.

Its function is as follows. This protein is one of the two subunits of integration host factor, a specific DNA-binding protein that functions in genetic recombination as well as in transcriptional and translational control. This chain is Integration host factor subunit alpha, found in Edwardsiella ictaluri (strain 93-146).